The primary structure comprises 295 residues: Indole-3-glycerol phosphate synthase (295 aa).

This sequence belongs to the TrpC family.

The enzyme catalyses 1-(2-carboxyphenylamino)-1-deoxy-D-ribulose 5-phosphate + H(+) = (1S,2R)-1-C-(indol-3-yl)glycerol 3-phosphate + CO2 + H2O. It participates in amino-acid biosynthesis; L-tryptophan biosynthesis; L-tryptophan from chorismate: step 4/5. This chain is Indole-3-glycerol phosphate synthase, found in Synechococcus sp. (strain ATCC 27144 / PCC 6301 / SAUG 1402/1) (Anacystis nidulans).